The chain runs to 81 residues: Acyl carrier protein (81 aa).

Positions 2 to 77 constitute a Carrier domain; that stretch reads ASVEEKVKQI…DAVDYITAHA (76 aa). Serine 37 carries the O-(pantetheine 4'-phosphoryl)serine modification.

The protein belongs to the acyl carrier protein (ACP) family. 4'-phosphopantetheine is transferred from CoA to a specific serine of apo-ACP by AcpS. This modification is essential for activity because fatty acids are bound in thioester linkage to the sulfhydryl of the prosthetic group.

It is found in the cytoplasm. It functions in the pathway lipid metabolism; fatty acid biosynthesis. Functionally, carrier of the growing fatty acid chain in fatty acid biosynthesis. The polypeptide is Acyl carrier protein (Koribacter versatilis (strain Ellin345)).